Consider the following 843-residue polypeptide: Proto-oncogene vav (843 aa).

Positions 1 to 119 (MELWRQCTHW…YTLSALSWTP (119 aa)) constitute a Calponin-homology (CH) domain. The DH domain occupies 194–373 (KRCCCLREIQ…RDLAQCVNEV (180 aa)). In terms of domain architecture, PH spans 402 to 504 (RPKIDGELKI…WMEQFEMAIS (103 aa)). The Phorbol-ester/DAG-type zinc finger occupies 515 to 564 (GHDFQMFSFEETTSCKACQMLLRGTFYQGYRCYRCRAPAHKECLGRVPPC). An SH3 1 domain is found at 590-658 (LGLPKMEVCQ…PCNRVRPYVH (69 aa)). Residues 669 to 763 (WYAGPMERAG…SLDTTLQFPY (95 aa)) enclose the SH2 domain. One can recognise an SH3 2 domain in the interval 780–840 (KYFGTAKARY…PSNYVEEDYS (61 aa)). Phosphotyrosine is present on residues Y824 and Y842.

As to quaternary structure, interacts with SHB. Interacts with APS, DOCK2, GRB2, GRB3, DOCK2, SLA, TEC and ZNF655/VIK. Interacts with SIAH2; without leading to its degradation. Associates with BLNK, PLCG1, GRB2 and NCK1 in a B-cell antigen receptor-dependent fashion. Interacts with CBLB; which inhibits tyrosine phosphorylation and down-regulates activity. May interact with CCPG1. Interacts with CLNK. Interacts with THEMIS2. Interacts with NEK3 and this interaction is prolactin-dependent. Interacts with ITK. Interacts with PTK2B/PYK2. Interacts with HCK. Interacts with PTK2B/PYK2. Interacts (via SH2 domain) with SYK. Interacts with ANKRD54. Interacts with CD6. Interacts with LCP2; this interaction plays a role in TCR-mediated cytokine production. Post-translationally, phosphorylated by FYN. Phosphorylated on tyrosine residues by HCK in response to IFNG and bacterial lipopolysaccharide (LPS).

Couples tyrosine kinase signals with the activation of the Rho/Rac GTPases, thus leading to cell differentiation and/or proliferation. This chain is Proto-oncogene vav (Vav1), found in Rattus norvegicus (Rat).